The following is a 703-amino-acid chain: Fibulin-1 (703 aa).

Positions 1 to 29 (MERAAPSRRVPLPLLLLGGLALLAAGVDA) are cleaved as a signal peptide. 35 cysteine pairs are disulfide-bonded: Cys-36-Cys-61, Cys-37-Cys-68, Cys-50-Cys-69, Cys-78-Cys-109, Cys-91-Cys-110, Cys-112-Cys-136, Cys-113-Cys-143, Cys-126-Cys-144, Cys-180-Cys-190, Cys-186-Cys-199, Cys-201-Cys-214, Cys-220-Cys-233, Cys-227-Cys-242, Cys-248-Cys-260, Cys-266-Cys-279, Cys-273-Cys-288, Cys-294-Cys-306, Cys-312-Cys-325, Cys-319-Cys-334, Cys-341-Cys-354, Cys-360-Cys-373, Cys-367-Cys-382, Cys-384-Cys-397, Cys-403-Cys-415, Cys-411-Cys-424, Cys-426-Cys-439, Cys-445-Cys-454, Cys-450-Cys-463, Cys-465-Cys-479, Cys-485-Cys-498, Cys-494-Cys-507, Cys-509-Cys-523, Cys-529-Cys-542, Cys-536-Cys-551, and Cys-556-Cys-577. Anaphylatoxin-like domains lie at 36 to 76 (CCAD…LEEL), 77 to 111 (HCAT…RCCH), and 112 to 144 (CCLL…QACC). An N-linked (GlcNAc...) (complex) asparagine glycan is attached at Asn-98. Residues 176–215 (LNDRCRGGGPCKQQCRDTGDEVVCSCFVGYQLLSDGVSCE) enclose the EGF-like 1 domain. The EGF-like 2; calcium-binding domain occupies 216–261 (DVNECITGSHSCRLGESCINTVGSFRCQRDSSCGTGYELTEDNSCK). Positions 262–307 (DIDECESGIHNCLPDFICQNTLGSFRCRPKLQCKSGFIQDALGNCI) constitute an EGF-like 3; calcium-binding domain. Positions 308 to 355 (DINECLSISAPCPIGHTCINTEGSYTCQKNVPNCGRGYHLNEEGTRCV) constitute an EGF-like 4; calcium-binding domain. The 43-residue stretch at 356-398 (DVDECAPPAEPCGKGHRCVNSPGSFRCECKTGYYFDGISRMCV) folds into the EGF-like 5; calcium-binding domain. A self-association and FN1-binding; calcium is necessary for homotypic binding, but not for heterotypic binding region spans residues 356-440 (DVDECAPPAE…RLSVDGRSCE (85 aa)). Residues 399 to 440 (DVNECQRYPGRLCGHKCENTLGSYLCSCSVGFRLSVDGRSCE) form the EGF-like 6; calcium-binding domain. Residues 441–480 (DINECSSSPCSQECANVYGSYQCYCRRGYQLSDVDGVTCE) form the EGF-like 7; calcium-binding domain. The EGF-like 8; calcium-binding domain occupies 481-524 (DIDECALPTGGHICSYRCINIPGSFQCSCPSSGYRLAPNGRNCQ). An EGF-like 9; calcium-binding domain is found at 525-578 (DIDECVTGIHNCSINETCFNIQGGFRCLAFECPENYRRSAATLQQEKTDTVRCI). N-linked (GlcNAc...) asparagine glycans are attached at residues Asn-535 and Asn-539.

Belongs to the fibulin family. In terms of assembly, homomultimerizes and interacts with various extracellular matrix components such as FN1, LAMA1, LAMA2, NID, ACAN, CSPG2 and type IV collagen. Also interacts with APP and FGB. Interacts with FBLN7. Interacts with CCN3. As to quaternary structure, (Microbial infection) Interacts with human papillomavirus/HPV type 16, 18 and 31 proteins E6. Isoform A and isoform B are only expressed in placenta. Isoform C and isoform D are expressed in a variety of tissues and cultured cells.

The protein localises to the secreted. It is found in the extracellular space. The protein resides in the extracellular matrix. Its function is as follows. Incorporated into fibronectin-containing matrix fibers. May play a role in cell adhesion and migration along protein fibers within the extracellular matrix (ECM). Could be important for certain developmental processes and contribute to the supramolecular organization of ECM architecture, in particular to those of basement membranes. Has been implicated in a role in cellular transformation and tumor invasion, it appears to be a tumor suppressor. May play a role in haemostasis and thrombosis owing to its ability to bind fibrinogen and incorporate into clots. Could play a significant role in modulating the neurotrophic activities of APP, particularly soluble APP. In Homo sapiens (Human), this protein is Fibulin-1 (FBLN1).